The chain runs to 428 residues: Adenylosuccinate synthetase (428 aa).

Residues 12–18 (GDEGKGK) and 40–42 (GHT) each bind GTP. D13 functions as the Proton acceptor in the catalytic mechanism. Positions 13 and 40 each coordinate Mg(2+). Residues 13-16 (DEGK), 38-41 (NAGH), T128, R142, Q223, T238, and R302 contribute to the IMP site. Catalysis depends on H41, which acts as the Proton donor. 298–304 (VTTGRPR) contacts substrate. GTP is bound by residues R304, 330–332 (KLD), and 413–415 (GVG).

The protein belongs to the adenylosuccinate synthetase family. Homodimer. Mg(2+) is required as a cofactor.

The protein resides in the cytoplasm. The enzyme catalyses IMP + L-aspartate + GTP = N(6)-(1,2-dicarboxyethyl)-AMP + GDP + phosphate + 2 H(+). It functions in the pathway purine metabolism; AMP biosynthesis via de novo pathway; AMP from IMP: step 1/2. Its function is as follows. Plays an important role in the de novo pathway of purine nucleotide biosynthesis. Catalyzes the first committed step in the biosynthesis of AMP from IMP. The polypeptide is Adenylosuccinate synthetase (Acidothermus cellulolyticus (strain ATCC 43068 / DSM 8971 / 11B)).